Here is a 129-residue protein sequence, read N- to C-terminus: DNA-directed RNA polymerase III subunit rpc9 (129 aa).

The protein belongs to the eukaryotic RPC9 RNA polymerase subunit family. As to quaternary structure, component of the RNA polymerase III (Pol III) complex.

The protein resides in the cytoplasm. It localises to the nucleus. In terms of biological role, DNA-dependent RNA polymerase catalyzes the transcription of DNA into RNA using the four ribonucleoside triphosphates as substrates. Specific peripheric component of RNA polymerase III which synthesizes small RNAs, such as 5S rRNA and tRNAs. The protein is DNA-directed RNA polymerase III subunit rpc9 (rpc17) of Schizosaccharomyces pombe (strain 972 / ATCC 24843) (Fission yeast).